Consider the following 86-residue polypeptide: Large ribosomal subunit protein uL24 (86 aa).

Belongs to the universal ribosomal protein uL24 family. Part of the 50S ribosomal subunit.

In terms of biological role, one of two assembly initiator proteins, it binds directly to the 5'-end of the 23S rRNA, where it nucleates assembly of the 50S subunit. Its function is as follows. One of the proteins that surrounds the polypeptide exit tunnel on the outside of the subunit. The protein is Large ribosomal subunit protein uL24 of Bdellovibrio bacteriovorus (strain ATCC 15356 / DSM 50701 / NCIMB 9529 / HD100).